The following is a 251-amino-acid chain: Developmental protein SEPALLATA 3 (251 aa).

Positions 3 to 57 (RGRVELKRIENKINRQVTFAKRRNGLLKKAYELSVLCDAEVALIIFSNRGKLYEF) constitute an MADS-box domain. The K-box domain occupies 91–181 (ELSSQQEYLK…RLRLADGYQM (91 aa)). Positions 94–177 (SQQEYLKLKE…NKTLRLRLAD (84 aa)) form a coiled coil.

Forms homodimers. Heterodimer with AP1 or AG capable of binding to CArG-box sequences. Binds AP3/PI to form a ternary complex. Interacts with AGL16. Interacts with TT16/AGL32.

The protein resides in the nucleus. Its function is as follows. Probable transcription factor active in inflorescence development and floral organogenesis. Functions with SEPALLATA1/AGL2 and SEPALLATA2/AGL4 to ensure proper development of petals, stamens and carpels and to prevent the indeterminate growth of the flower meristem. Interacts with APETALA1, AGAMOUS or APETALA3/PISTILLATA to form complexes, that could be involved in genes regulation during floral meristem development. Binds specifically to the CArG box DNA sequence 5'-CC (A/T)6 GG-3'. This Arabidopsis thaliana (Mouse-ear cress) protein is Developmental protein SEPALLATA 3 (SEP3).